A 301-amino-acid polypeptide reads, in one-letter code: Cell division protein kinase 2 homolog CRK1 (301 aa).

One can recognise a Protein kinase domain in the interval 5–297 (YERQEKIGEG…AADALNHPYF (293 aa)). ATP is bound by residues 11 to 19 (IGEGTYGVV) and K34. Catalysis depends on D127, which acts as the Proton acceptor. T160 bears the Phosphothreonine; by CAK mark.

Belongs to the protein kinase superfamily. CMGC Ser/Thr protein kinase family. CDC2/CDKX subfamily. Forms a stable but non-covalent complex with a regulatory subunit and with a cyclin.

The catalysed reaction is [DNA-directed RNA polymerase] + ATP = phospho-[DNA-directed RNA polymerase] + ADP + H(+). Its activity is regulated as follows. Phosphorylation at Thr-15 or Tyr-16 inactivates the enzyme, while phosphorylation at Thr-160 activates it. Functionally, may be involved in some stage-specific role in the promastigote cell cycle. The chain is Cell division protein kinase 2 homolog CRK1 (CRK1) from Leishmania mexicana.